Consider the following 398-residue polypeptide: 1-deoxy-D-xylulose 5-phosphate reductoisomerase (398 aa).

Residues Thr11, Gly12, Ser13, Ile14, Arg38, Asn39, and Asn125 each contribute to the NADPH site. Lys126 lines the 1-deoxy-D-xylulose 5-phosphate pocket. Glu127 is an NADPH binding site. Asp151 is a binding site for Mn(2+). Residues Ser152, Glu153, Ser179, and His202 each coordinate 1-deoxy-D-xylulose 5-phosphate. Glu153 lines the Mn(2+) pocket. Gly208 is an NADPH binding site. 4 residues coordinate 1-deoxy-D-xylulose 5-phosphate: Ser215, Asn220, Lys221, and Glu224. Glu224 provides a ligand contact to Mn(2+).

Belongs to the DXR family. Mg(2+) serves as cofactor. The cofactor is Mn(2+).

It carries out the reaction 2-C-methyl-D-erythritol 4-phosphate + NADP(+) = 1-deoxy-D-xylulose 5-phosphate + NADPH + H(+). It functions in the pathway isoprenoid biosynthesis; isopentenyl diphosphate biosynthesis via DXP pathway; isopentenyl diphosphate from 1-deoxy-D-xylulose 5-phosphate: step 1/6. Its function is as follows. Catalyzes the NADPH-dependent rearrangement and reduction of 1-deoxy-D-xylulose-5-phosphate (DXP) to 2-C-methyl-D-erythritol 4-phosphate (MEP). This chain is 1-deoxy-D-xylulose 5-phosphate reductoisomerase, found in Burkholderia cenocepacia (strain HI2424).